A 336-amino-acid polypeptide reads, in one-letter code: ATP-dependent 6-phosphofructokinase (336 aa).

Glycine 11 is a binding site for ATP. 21 to 25 is an ADP binding site; it reads RAVVR. ATP is bound by residues 72–73 and 102–105; these read RY and GDGS. Aspartate 103 contributes to the Mg(2+) binding site. 125–127 provides a ligand contact to substrate; that stretch reads TID. Aspartate 127 functions as the Proton acceptor in the catalytic mechanism. Arginine 154 serves as a coordination point for ADP. Residues arginine 162 and 169–171 contribute to the substrate site; that span reads MGR. ADP-binding positions include 185–187, lysine 211, and 213–215; these read GAD and KKH. Residues glutamate 222, arginine 244, and 250–253 each bind substrate; that span reads HIQR.

This sequence belongs to the phosphofructokinase type A (PFKA) family. ATP-dependent PFK group I subfamily. Prokaryotic clade 'B1' sub-subfamily. As to quaternary structure, homotetramer. Mg(2+) is required as a cofactor.

The protein localises to the cytoplasm. The enzyme catalyses beta-D-fructose 6-phosphate + ATP = beta-D-fructose 1,6-bisphosphate + ADP + H(+). It functions in the pathway carbohydrate degradation; glycolysis; D-glyceraldehyde 3-phosphate and glycerone phosphate from D-glucose: step 3/4. Allosterically activated by ADP and other diphosphonucleosides, and allosterically inhibited by phosphoenolpyruvate. Functionally, catalyzes the phosphorylation of D-fructose 6-phosphate to fructose 1,6-bisphosphate by ATP, the first committing step of glycolysis. The protein is ATP-dependent 6-phosphofructokinase of Streptococcus sanguinis (strain SK36).